Consider the following 155-residue polypeptide: MEPQFNNPQERPRSLHHLSEVLEIPLIDLRLSCVYCKKELTRAEVYNFACTELKLVYRDDFPYAVCRVCLLFYSKVRKYRYYDYSVYGATLESITKKQLCDLLIRCYRCQSPLTPEEKQLHCDRKRRFHLIAHGWTGSCLGCWRQTSREPRESTV.

2 zinc fingers span residues 33–69 and 106–142; these read CVYC…CRVC and CYRC…CLGC.

The protein belongs to the papillomaviridae E6 protein family. As to quaternary structure, forms homodimers. Interacts with ubiquitin-protein ligase UBE3A/E6-AP; this interaction stimulates UBE3A ubiquitin activity. Interacts with host TP53 and EP300; this interaction inhibits TP53 activity.

It is found in the host cytoplasm. It localises to the host nucleus. Functionally, this protein has transforming activity in vitro. Its function is as follows. Plays a major role in the induction and maintenance of cellular transformation. E6 associates with host UBE3A/E6-AP ubiquitin-protein ligase and modulates its activity. Sequesters tumor suppressor TP53 in the host cytoplasm and modulates its activity by interacting with host EP300 that results in the reduction of TP53 acetylation and activation. In turn, apoptosis induced by DNA damage is inhibited. E6 also protects host keratinocytes from apoptosis by mediating the degradation of host BAK1. May also inhibit host immune response. The polypeptide is Protein E6 (Human papillomavirus 56).